The chain runs to 142 residues: Large ribosomal subunit protein uL11 (142 aa).

This sequence belongs to the universal ribosomal protein uL11 family. As to quaternary structure, part of the ribosomal stalk of the 50S ribosomal subunit. Interacts with L10 and the large rRNA to form the base of the stalk. L10 forms an elongated spine to which L12 dimers bind in a sequential fashion forming a multimeric L10(L12)X complex. Post-translationally, one or more lysine residues are methylated.

Its function is as follows. Forms part of the ribosomal stalk which helps the ribosome interact with GTP-bound translation factors. The polypeptide is Large ribosomal subunit protein uL11 (Xylella fastidiosa (strain Temecula1 / ATCC 700964)).